The following is a 147-amino-acid chain: Deoxyuridine 5'-triphosphate nucleotidohydrolase (147 aa).

Substrate is bound by residues 67 to 69, Asn-80, and 84 to 86; these read RSG and TID.

It belongs to the dUTPase family. Requires Mg(2+) as cofactor.

The catalysed reaction is dUTP + H2O = dUMP + diphosphate + H(+). It functions in the pathway pyrimidine metabolism; dUMP biosynthesis; dUMP from dCTP (dUTP route): step 2/2. This enzyme is involved in nucleotide metabolism: it produces dUMP, the immediate precursor of thymidine nucleotides and it decreases the intracellular concentration of dUTP so that uracil cannot be incorporated into DNA. The protein is Deoxyuridine 5'-triphosphate nucleotidohydrolase of Anaplasma marginale (strain St. Maries).